A 172-amino-acid polypeptide reads, in one-letter code: 3-phenylpropionate/cinnamic acid dioxygenase subunit beta (172 aa).

Belongs to the bacterial ring-hydroxylating dioxygenase beta subunit family. As to quaternary structure, this dioxygenase system consists of four proteins: the two subunits of the hydroxylase component (HcaE and HcaF), a ferredoxin (HcaC) and a ferredoxin reductase (HcaD).

It carries out the reaction 3-phenylpropanoate + NADH + O2 + H(+) = 3-(cis-5,6-dihydroxycyclohexa-1,3-dien-1-yl)propanoate + NAD(+). The catalysed reaction is (E)-cinnamate + NADH + O2 + H(+) = (2E)-3-(cis-5,6-dihydroxycyclohexa-1,3-dien-1-yl)prop-2-enoate + NAD(+). It participates in aromatic compound metabolism; 3-phenylpropanoate degradation. Part of the multicomponent 3-phenylpropionate dioxygenase. Converts 3-phenylpropionic acid (PP) and cinnamic acid (CI) into 3-phenylpropionate-dihydrodiol (PP-dihydrodiol) and cinnamic acid-dihydrodiol (CI-dihydrodiol), respectively. The sequence is that of 3-phenylpropionate/cinnamic acid dioxygenase subunit beta from Escherichia coli O17:K52:H18 (strain UMN026 / ExPEC).